The chain runs to 199 residues: LexA repressor (199 aa).

The H-T-H motif DNA-binding region spans 28–47 (IRDIAKHFKLTPRGAHIHVI). Active-site for autocatalytic cleavage activity residues include Ser-120 and Lys-157.

Belongs to the peptidase S24 family. Homodimer.

It carries out the reaction Hydrolysis of Ala-|-Gly bond in repressor LexA.. In terms of biological role, represses a number of genes involved in the response to DNA damage (SOS response), including recA and lexA. In the presence of single-stranded DNA, RecA interacts with LexA causing an autocatalytic cleavage which disrupts the DNA-binding part of LexA, leading to derepression of the SOS regulon and eventually DNA repair. The polypeptide is LexA repressor (Thermosipho melanesiensis (strain DSM 12029 / CIP 104789 / BI429)).